The chain runs to 57 residues: Large ribosomal subunit protein uL30 (57 aa).

This sequence belongs to the universal ribosomal protein uL30 family. As to quaternary structure, part of the 50S ribosomal subunit.

The polypeptide is Large ribosomal subunit protein uL30 (Clostridium acetobutylicum (strain ATCC 824 / DSM 792 / JCM 1419 / IAM 19013 / LMG 5710 / NBRC 13948 / NRRL B-527 / VKM B-1787 / 2291 / W)).